We begin with the raw amino-acid sequence, 1249 residues long: AMB antimetabolite synthetase AmbB (1249 aa).

Residues 245 to 633 form an adenylation region; sequence FEAQARRTPQ…LGRLDDQVKF (389 aa). The tract at residues 716–735 is disordered; the sequence is IDRKALPRPQATGAEPQALP. A Carrier domain is found at 734–809; the sequence is LPSDPLEQAL…ALLELLRQAA (76 aa). O-(pantetheine 4'-phosphoryl)serine is present on Ser-768. The segment at 823-1150 is condensation; the sequence is GLSLAERRLW…CVTQALRQRG (328 aa).

Belongs to the NRP synthetase family. It depends on pantetheine 4'-phosphate as a cofactor.

The catalysed reaction is holo-[peptidyl-carrier protein] + L-alanine + ATP = L-alanyl-[peptidyl-carrier protein] + AMP + diphosphate. Functionally, involved in the biosynthesis of the antimetabolite L-2-amino-4-methoxy-trans-3-butenoic acid (AMB), a non-proteinogenic amino acid which is toxic for prokaryotes and eukaryotes. Adenylates L-alanine and loads it onto its peptidyl carrier domain via a thioester linkage to the phosphopanthetheine moiety. In addition, loads activated L-Ala in trans onto the second carrier domain of AmbE. Can also activate L-Ser, Gly and D-Ala, albeit to a lower extent. The condensation domain of AmbB probably condenses the activated L-Ala and the L-Glu loaded on AmbE to form a L-Glu-L-Ala dipeptide at the first carrier domain of AmbE. The sequence is that of AMB antimetabolite synthetase AmbB from Pseudomonas aeruginosa (strain ATCC 15692 / DSM 22644 / CIP 104116 / JCM 14847 / LMG 12228 / 1C / PRS 101 / PAO1).